We begin with the raw amino-acid sequence, 224 residues long: Redox-sensing transcriptional repressor Rex (224 aa).

A DNA-binding region (H-T-H motif) is located at residues Arg-17–Phe-56. Gly-91–Gly-96 is an NAD(+) binding site.

The protein belongs to the transcriptional regulatory Rex family. In terms of assembly, homodimer.

Its subcellular location is the cytoplasm. Its function is as follows. Modulates transcription in response to changes in cellular NADH/NAD(+) redox state. The polypeptide is Redox-sensing transcriptional repressor Rex (Thermoanaerobacter pseudethanolicus (strain ATCC 33223 / 39E) (Clostridium thermohydrosulfuricum)).